The chain runs to 514 residues: 2,3-bisphosphoglycerate-independent phosphoglycerate mutase (514 aa).

Aspartate 14 and serine 64 together coordinate Mn(2+). Serine 64 serves as the catalytic Phosphoserine intermediate. Substrate is bound by residues histidine 125, 155 to 156 (RD), arginine 187, arginine 193, 263 to 266 (RADR), and lysine 336. Residues aspartate 403, histidine 407, aspartate 444, histidine 445, and histidine 463 each coordinate Mn(2+).

Belongs to the BPG-independent phosphoglycerate mutase family. As to quaternary structure, monomer. Mn(2+) is required as a cofactor.

It catalyses the reaction (2R)-2-phosphoglycerate = (2R)-3-phosphoglycerate. Its pathway is carbohydrate degradation; glycolysis; pyruvate from D-glyceraldehyde 3-phosphate: step 3/5. Functionally, catalyzes the interconversion of 2-phosphoglycerate and 3-phosphoglycerate. The chain is 2,3-bisphosphoglycerate-independent phosphoglycerate mutase from Escherichia coli (strain ATCC 8739 / DSM 1576 / NBRC 3972 / NCIMB 8545 / WDCM 00012 / Crooks).